A 208-amino-acid chain; its full sequence is Ubiquinone biosynthesis protein COQ4 homolog, mitochondrial (208 aa).

Zn(2+)-binding residues include H105, D106, H109, and E122.

The protein belongs to the COQ4 family. In terms of assembly, component of a multi-subunit COQ enzyme complex. The cofactor is Zn(2+).

It is found in the mitochondrion inner membrane. It catalyses the reaction a 4-hydroxy-3-methoxy-5-(all-trans-polyprenyl)benzoate + H(+) = a 2-methoxy-6-(all-trans-polyprenyl)phenol + CO2. The protein operates within cofactor biosynthesis; ubiquinone biosynthesis. Lyase that catalyzes the C1-decarboxylation of 4-hydroxy-3-methoxy-5-(all-trans-polyprenyl)benzoic acid into 2-methoxy-6-(all-trans-polyprenyl)phenol during ubiquinone biosynthesis. This is Ubiquinone biosynthesis protein COQ4 homolog, mitochondrial from Nematostella vectensis (Starlet sea anemone).